Reading from the N-terminus, the 215-residue chain is RxLR effector protein PITG_00582 (215 aa).

Residues methionine 1 to cysteine 19 form the signal peptide. The short motif at arginine 39–arginine 51 is the RxLR-dEER element. The stretch at valine 81–glutamine 149 forms a coiled coil.

The protein belongs to the RxLR effector family.

The protein localises to the secreted. It is found in the host cell membrane. Its function is as follows. Effector that might be involved in host plant infection. The chain is RxLR effector protein PITG_00582 from Phytophthora infestans (strain T30-4) (Potato late blight agent).